We begin with the raw amino-acid sequence, 620 residues long: Protein VERNALIZATION INSENSITIVE 3 (620 aa).

A PHD-type zinc finger spans residues 148-206 (RCSCCICQKFDDNKDPSLWLTCDACGSSCHLECGLKQDRYGIGSDDLDGRFYCAYCGKD). A Nuclear localization signal motif is present at residues 213-220 (WRKQVKVA). The Fibronectin type-III domain occupies 314-412 (DKMTVRVEEI…ELRFTTLKDD (99 aa)). The disordered stretch occupies residues 411-466 (DDGDEAGDQQSPLTNSSSGLCSNPSLPEDESNNVNKSCSKGNGDKDNTEHCSAGEV). A compositionally biased stretch (polar residues) spans 418 to 435 (DQQSPLTNSSSGLCSNPS). Positions 493–500 (CKRDIYKG) match the Nuclear localization signal motif. Residues 512–620 (TVSLNEKPEI…PAGICLKLWH (109 aa)) are VIN3-Interacting Domain (VID).

As to quaternary structure, interacts with VIL1 and VIL2. The heterodimer made of VIN3 and VIL1 is required for establishing the vernalization-induced epigenetic silencing of FLC. Component of the plant homeodomain / polycomb repressive complex 2 (PHD-PRC2) large complex during prolonged cold, composed of core PRC2 components (VRN2, EZA1, FIE and MSI1), and three related PHD finger proteins (VIL1, VIL2 and VIN3) that mediates histone H3 trimethylation on 'Lys-27' (H3K27me3). Expressed in shoot and root apices. Displays the same pattern of expression as FLC.

It is found in the nucleus. It localises to the nucleus speckle. Its function is as follows. Plays a central role in vernalization by mediating the initial transcriptional repression of the homeotic gene FLC, a floral repressor, after a cold treatment. However, due to its transient expression, it cannot maintain repression of FLC, which is then maintained by Polycomb Group complexes containing VRN2 throughout development. Required to deacetylate histones on the FLC promoter. Together with VIL1, required during vernalization for the modifications of FLC and FLM chromatin that are associated with an epigenetically silenced state (e.g. chromatin modifications, histone deacetylation, and trimethylated H3 'Lys-4' H3K4me3 and 'Lys-27' H3K27me3) and with acquisition of competence to flower. The chain is Protein VERNALIZATION INSENSITIVE 3 (VIN3) from Arabidopsis thaliana (Mouse-ear cress).